A 223-amino-acid polypeptide reads, in one-letter code: Protein-lysine N-methyltransferase CG9154 (223 aa).

The protein belongs to the class I-like SAM-binding methyltransferase superfamily. EFM5 family.

Its subcellular location is the cytoplasm. Functionally, S-adenosyl-L-methionine-dependent protein-lysine N-methyltransferase that methylates elongation factor 1-alpha. In Drosophila melanogaster (Fruit fly), this protein is Protein-lysine N-methyltransferase CG9154.